A 96-amino-acid chain; its full sequence is Myticin-A (96 aa).

Positions 1-20 (MKATILLAVLVAVFVAGTEA) are cleaved as a signal peptide. A propeptide spans 61–96 (VNNPFRVNQVAKSINDLDYTPIMKSMENLDNGMDML) (removed in mature form).

Post-translationally, contains four disulfide bonds. As to expression, hemocytes.

The protein resides in the secreted. In terms of biological role, bacteriolytic activity against Gram-positive bacteria M.luteus, B.megaterium and A.viridans. This chain is Myticin-A, found in Mytilus galloprovincialis (Mediterranean mussel).